The chain runs to 195 residues: Neurensin-1 (195 aa).

The next 2 membrane-spanning stretches (helical) occupy residues 66 to 86 (LISGTVFVILGLTVLAVGFLV) and 120 to 140 (AVLFCIGGTSMAGCLLMSVFV).

The protein belongs to the VMP family. As to expression, expressed in brain. Not detectable in other tissues tested.

The protein localises to the membrane. It is found in the cell projection. Its subcellular location is the neuron projection. Functionally, may play an important role in neural organelle transport, and in transduction of nerve signals or in nerve growth. May play a role in neurite extension. May play a role in memory consolidation. In Homo sapiens (Human), this protein is Neurensin-1.